Here is a 1400-residue protein sequence, read N- to C-terminus: DNA-directed RNA polymerase subunit beta' (1400 aa).

The Zn(2+) site is built by cysteine 70, cysteine 72, cysteine 85, and cysteine 88. 3 residues coordinate Mg(2+): aspartate 460, aspartate 462, and aspartate 464. Zn(2+) contacts are provided by cysteine 814, cysteine 888, cysteine 895, and cysteine 898.

It belongs to the RNA polymerase beta' chain family. As to quaternary structure, the RNAP catalytic core consists of 2 alpha, 1 beta, 1 beta' and 1 omega subunit. When a sigma factor is associated with the core the holoenzyme is formed, which can initiate transcription. It depends on Mg(2+) as a cofactor. Zn(2+) is required as a cofactor.

The enzyme catalyses RNA(n) + a ribonucleoside 5'-triphosphate = RNA(n+1) + diphosphate. Its function is as follows. DNA-dependent RNA polymerase catalyzes the transcription of DNA into RNA using the four ribonucleoside triphosphates as substrates. The chain is DNA-directed RNA polymerase subunit beta' from Vibrio vulnificus (strain CMCP6).